We begin with the raw amino-acid sequence, 388 residues long: MKKIAIFGSTGSIGSSLLKIIKDDQKNFKIELLTVNKNYKKLIKQVKLFNVKNVIVTDYNSFLITTKLLKNAKVKVFNNFDSLNKIFNTNNKIDYSMCAISGFDGLKPTLDIIKFTKTIAIANKESIICGWNLIKKDLKKYKTYFVPVDSEHFSIWSLLDNNKKNNFEKIYITASGGPFRNLSLKKFRNISVKDALKHPNWSMGKKITIDSATMMNKVFEIIEAKKIFNLNYKQLEILIHPKSYLHAIVKFNNGLSKLLVHDTNMTIPIFNSIYFNTDKKLKSKNIDIKTLNNLNLKKIDNIRFPVIKILNNLSNEDSLFETIIVSANDKLVKLFLNNKIKFNDISNTLIKICNTPEFNKFKSMKPRNIDEIQNLNDYVSLKISSMSV.

Positions 10, 11, 12, 13, 37, 38, and 123 each coordinate NADPH. Lys-124 provides a ligand contact to 1-deoxy-D-xylulose 5-phosphate. An NADPH-binding site is contributed by Glu-125. A Mn(2+)-binding site is contributed by Asp-149. 4 residues coordinate 1-deoxy-D-xylulose 5-phosphate: Ser-150, Glu-151, Ser-175, and His-198. Glu-151 is a Mn(2+) binding site. Residue Gly-204 participates in NADPH binding. Positions 211, 216, 217, and 220 each coordinate 1-deoxy-D-xylulose 5-phosphate. Glu-220 contacts Mn(2+).

The protein belongs to the DXR family. It depends on Mg(2+) as a cofactor. The cofactor is Mn(2+).

It carries out the reaction 2-C-methyl-D-erythritol 4-phosphate + NADP(+) = 1-deoxy-D-xylulose 5-phosphate + NADPH + H(+). The protein operates within isoprenoid biosynthesis; isopentenyl diphosphate biosynthesis via DXP pathway; isopentenyl diphosphate from 1-deoxy-D-xylulose 5-phosphate: step 1/6. Its function is as follows. Catalyzes the NADPH-dependent rearrangement and reduction of 1-deoxy-D-xylulose-5-phosphate (DXP) to 2-C-methyl-D-erythritol 4-phosphate (MEP). The polypeptide is 1-deoxy-D-xylulose 5-phosphate reductoisomerase (Pelagibacter ubique (strain HTCC1062)).